The chain runs to 320 residues: MRQTKTGILLANLGTPDAPTPEAVKRYLKQFLSDRRVVDTSRLLWWPLLRGVILPLRSPRVAKLYASVWMEGGSPLMVYSRQQQQALAQRLPETPVALGMSYGSPSLESAVDELLAEHVDHIVVLPLYPQYSCSTVGAVWDELARILARKRSIPGISFIRDYADNHDYINALANSVRASFAKHGEPDLLLLSYHGIPQRYADEGDDYPQRCRTTTRELASALEMAPEKVMMTFQSRFGREPWLMPYTDETLKMLGEKGVGHIQVMCPGFAADCLETLEEIAEQNREVFLGAGGKKYEYIPALNATPEHIEMMANLVAAYR.

Fe cation contacts are provided by His-194 and Glu-275.

It belongs to the ferrochelatase family. Monomer.

It localises to the cytoplasm. It catalyses the reaction heme b + 2 H(+) = protoporphyrin IX + Fe(2+). The protein operates within porphyrin-containing compound metabolism; protoheme biosynthesis; protoheme from protoporphyrin-IX: step 1/1. Catalyzes the ferrous insertion into protoporphyrin IX. This Escherichia coli O81 (strain ED1a) protein is Ferrochelatase.